Consider the following 83-residue polypeptide: Putative defensin-like protein 150 (83 aa).

Positions 1 to 25 are cleaved as a signal peptide; that stretch reads MMGKHIQLSFAILIMFTIFVLGAVG. 4 cysteine pairs are disulfide-bonded: C35–C83, C44–C64, C49–C77, and C53–C79.

Belongs to the DEFL family.

The protein localises to the secreted. The chain is Putative defensin-like protein 150 (LCR32) from Arabidopsis thaliana (Mouse-ear cress).